We begin with the raw amino-acid sequence, 120 residues long: Large ribosomal subunit protein P3 (120 aa).

A disordered region spans residues 83–120 (GGGGAAASGGAAAEAPKEEKKEEEKEESDDDMGFSLFD).

Belongs to the eukaryotic ribosomal protein P1/P2 family. Post-translationally, phosphorylated.

Functionally, plays an important role in the elongation step of protein synthesis. The polypeptide is Large ribosomal subunit protein P3 (RPP3A) (Zea mays (Maize)).